Consider the following 277-residue polypeptide: Putative hydro-lyase SCO1412 (277 aa).

It belongs to the D-glutamate cyclase family.

The protein is Putative hydro-lyase SCO1412 of Streptomyces coelicolor (strain ATCC BAA-471 / A3(2) / M145).